Here is a 355-residue protein sequence, read N- to C-terminus: UDP-N-acetylglucosamine--N-acetylmuramyl-(pentapeptide) pyrophosphoryl-undecaprenol N-acetylglucosamine transferase (355 aa).

UDP-N-acetyl-alpha-D-glucosamine-binding positions include 15–17 (TGG), asparagine 127, arginine 163, serine 191, isoleucine 244, 263–268 (ALTVSE), and glutamine 288.

The protein belongs to the glycosyltransferase 28 family. MurG subfamily.

The protein localises to the cell inner membrane. The enzyme catalyses di-trans,octa-cis-undecaprenyl diphospho-N-acetyl-alpha-D-muramoyl-L-alanyl-D-glutamyl-meso-2,6-diaminopimeloyl-D-alanyl-D-alanine + UDP-N-acetyl-alpha-D-glucosamine = di-trans,octa-cis-undecaprenyl diphospho-[N-acetyl-alpha-D-glucosaminyl-(1-&gt;4)]-N-acetyl-alpha-D-muramoyl-L-alanyl-D-glutamyl-meso-2,6-diaminopimeloyl-D-alanyl-D-alanine + UDP + H(+). Its pathway is cell wall biogenesis; peptidoglycan biosynthesis. Functionally, cell wall formation. Catalyzes the transfer of a GlcNAc subunit on undecaprenyl-pyrophosphoryl-MurNAc-pentapeptide (lipid intermediate I) to form undecaprenyl-pyrophosphoryl-MurNAc-(pentapeptide)GlcNAc (lipid intermediate II). The protein is UDP-N-acetylglucosamine--N-acetylmuramyl-(pentapeptide) pyrophosphoryl-undecaprenol N-acetylglucosamine transferase of Salmonella gallinarum (strain 287/91 / NCTC 13346).